A 167-amino-acid chain; its full sequence is uncharacterized protein (167 aa).

It is found in the mitochondrion. This is an uncharacterized protein from Marchantia polymorpha (Common liverwort).